Reading from the N-terminus, the 439-residue chain is MPMHDQTSYMTGFGNEFATEAVAGSLPVGQNSPQRVAHGLYAEQLSGTAFTAPRGENRRSWLYRIRPAAVHGRFSLIEQSRLHNDFGGGPVPPDQMRWSPLPLPATRTDFVDGLYTMAGNGSPEAMTGVAVHLYAANASMRDRFFYNADGELLLVPQLGRLRVCTELGVLELEPQQIGVIPRGLRFRVELLDSEARGYVCENFGGLLRLPELGPIGANGLANPRDFQTPRAAFEQREGRFELVAKFQGHLWRADIGHSPLDVVAWHGNYAPYRYDLRRFNTIGSISFDHPDPSIFTVLTSPSDTHGTANMDFAIFPPRWLVAQHTFRPPWFHRNVASEFMGLVHGVYDAKAEGFAPGGASLHNCMSGHGPDAATFDKASQADLTRPDVIADTMAFMFETRAVLRPTQQALNAAHRQADYQQCWSGLRAAFQPPTTEDAT.

The Proton acceptor role is filled by His-289. Fe cation is bound by residues His-332 and Glu-338. Residues Tyr-347 and His-368 each contribute to the homogentisate site. Fe cation is bound at residue His-368.

This sequence belongs to the homogentisate dioxygenase family. In terms of assembly, hexamer; dimer of trimers. Fe cation serves as cofactor.

It carries out the reaction homogentisate + O2 = 4-maleylacetoacetate + H(+). It participates in amino-acid degradation; L-phenylalanine degradation; acetoacetate and fumarate from L-phenylalanine: step 4/6. Functionally, involved in the catabolism of homogentisate (2,5-dihydroxyphenylacetate or 2,5-OH-PhAc), a central intermediate in the degradation of phenylalanine and tyrosine. Catalyzes the oxidative ring cleavage of the aromatic ring of homogentisate to yield maleylacetoacetate. This chain is Homogentisate 1,2-dioxygenase, found in Xanthomonas euvesicatoria pv. vesicatoria (strain 85-10) (Xanthomonas campestris pv. vesicatoria).